The sequence spans 498 residues: Guanosine-5'-triphosphate,3'-diphosphate pyrophosphatase (498 aa).

Belongs to the GppA/Ppx family. GppA subfamily.

It catalyses the reaction guanosine 3'-diphosphate 5'-triphosphate + H2O = guanosine 3',5'-bis(diphosphate) + phosphate + H(+). It functions in the pathway purine metabolism; ppGpp biosynthesis; ppGpp from GTP: step 2/2. In terms of biological role, catalyzes the conversion of pppGpp to ppGpp. Guanosine pentaphosphate (pppGpp) is a cytoplasmic signaling molecule which together with ppGpp controls the 'stringent response', an adaptive process that allows bacteria to respond to amino acid starvation, resulting in the coordinated regulation of numerous cellular activities. The chain is Guanosine-5'-triphosphate,3'-diphosphate pyrophosphatase from Yersinia pseudotuberculosis serotype O:1b (strain IP 31758).